The sequence spans 390 residues: Magnesium-protoporphyrin IX monomethyl ester [oxidative] cyclase (390 aa).

Belongs to the AcsF family. Fe cation serves as cofactor.

The catalysed reaction is Mg-protoporphyrin IX 13-monomethyl ester + 3 NADPH + 3 O2 + 2 H(+) = 3,8-divinyl protochlorophyllide a + 3 NADP(+) + 5 H2O. Its pathway is porphyrin-containing compound metabolism; chlorophyll biosynthesis (light-independent). Catalyzes the formation of the isocyclic ring in chlorophyll biosynthesis. Mediates the cyclase reaction, which results in the formation of divinylprotochlorophyllide (Pchlide) characteristic of all chlorophylls from magnesium-protoporphyrin IX 13-monomethyl ester (MgPMME). The chain is Magnesium-protoporphyrin IX monomethyl ester [oxidative] cyclase from Prochlorococcus marinus subsp. pastoris (strain CCMP1986 / NIES-2087 / MED4).